The following is an 870-amino-acid chain: DNA mismatch repair protein MutS (870 aa).

Residue 621–628 (GPNMAGKS) coordinates ATP. The interval 813 to 834 (GAPRIAKSRRQRTPDPSPQFSL) is disordered.

It belongs to the DNA mismatch repair MutS family.

In terms of biological role, this protein is involved in the repair of mismatches in DNA. It is possible that it carries out the mismatch recognition step. This protein has a weak ATPase activity. The chain is DNA mismatch repair protein MutS from Pelobacter propionicus (strain DSM 2379 / NBRC 103807 / OttBd1).